Reading from the N-terminus, the 425-residue chain is Enolase (425 aa).

Gln165 contributes to the (2R)-2-phosphoglycerate binding site. Residue Glu207 is the Proton donor of the active site. Mg(2+) is bound by residues Asp244, Glu285, and Asp312. Residues Lys337, Arg366, Ser367, and Lys388 each contribute to the (2R)-2-phosphoglycerate site. The active-site Proton acceptor is Lys337.

This sequence belongs to the enolase family. Mg(2+) is required as a cofactor.

The protein resides in the cytoplasm. The protein localises to the secreted. It is found in the cell surface. The enzyme catalyses (2R)-2-phosphoglycerate = phosphoenolpyruvate + H2O. It participates in carbohydrate degradation; glycolysis; pyruvate from D-glyceraldehyde 3-phosphate: step 4/5. Its function is as follows. Catalyzes the reversible conversion of 2-phosphoglycerate (2-PG) into phosphoenolpyruvate (PEP). It is essential for the degradation of carbohydrates via glycolysis. The sequence is that of Enolase from Wolbachia sp. subsp. Brugia malayi (strain TRS).